We begin with the raw amino-acid sequence, 114 residues long: Beta-microseminoprotein (114 aa).

The signal sequence occupies residues 1-20; that stretch reads MNVLLGGFVIFATFVTLCNA. Intrachain disulfides connect C22/C70, C38/C62, C57/C93, C60/C69, and C84/C107.

Belongs to the beta-microseminoprotein family. In terms of assembly, homodimer; Interacts with PI16.

The protein localises to the secreted. This chain is Beta-microseminoprotein (MSMB), found in Papio anubis (Olive baboon).